We begin with the raw amino-acid sequence, 575 residues long: Phosphoenolpyruvate-protein phosphotransferase (575 aa).

His-191 acts as the Tele-phosphohistidine intermediate in catalysis. Residues Arg-298 and Arg-334 each contribute to the phosphoenolpyruvate site. Mg(2+) contacts are provided by Glu-435 and Asp-459. Phosphoenolpyruvate-binding positions include 458-459 (ND) and Arg-469. Cys-506 serves as the catalytic Proton donor.

Belongs to the PEP-utilizing enzyme family. Homodimer. Mg(2+) is required as a cofactor.

It localises to the cytoplasm. The catalysed reaction is L-histidyl-[protein] + phosphoenolpyruvate = N(pros)-phospho-L-histidyl-[protein] + pyruvate. General (non sugar-specific) component of the phosphoenolpyruvate-dependent sugar phosphotransferase system (sugar PTS). This major carbohydrate active-transport system catalyzes the phosphorylation of incoming sugar substrates concomitantly with their translocation across the cell membrane. Enzyme I transfers the phosphoryl group from phosphoenolpyruvate (PEP) to the phosphoryl carrier protein (HPr). This chain is Phosphoenolpyruvate-protein phosphotransferase (ptsI), found in Lactococcus lactis subsp. lactis (strain IL1403) (Streptococcus lactis).